We begin with the raw amino-acid sequence, 104 residues long: MAAKIRRDDEVIVLTGKDKGKRGKVKNVLSSGKVIVEGINLVKKHQKPVPALNQPGGIVEKEAAIQVSNLALFNATTGKADRVGFRFEDGKKVRFFKSTSETIK.

The protein belongs to the universal ribosomal protein uL24 family. Part of the 50S ribosomal subunit.

In terms of biological role, one of two assembly initiator proteins, it binds directly to the 5'-end of the 23S rRNA, where it nucleates assembly of the 50S subunit. One of the proteins that surrounds the polypeptide exit tunnel on the outside of the subunit. This chain is Large ribosomal subunit protein uL24, found in Yersinia pseudotuberculosis serotype O:1b (strain IP 31758).